Reading from the N-terminus, the 254-residue chain is 3-deoxy-manno-octulosonate cytidylyltransferase (254 aa).

The protein belongs to the KdsB family.

It localises to the cytoplasm. The catalysed reaction is 3-deoxy-alpha-D-manno-oct-2-ulosonate + CTP = CMP-3-deoxy-beta-D-manno-octulosonate + diphosphate. The protein operates within nucleotide-sugar biosynthesis; CMP-3-deoxy-D-manno-octulosonate biosynthesis; CMP-3-deoxy-D-manno-octulosonate from 3-deoxy-D-manno-octulosonate and CTP: step 1/1. Its pathway is bacterial outer membrane biogenesis; lipopolysaccharide biosynthesis. In terms of biological role, activates KDO (a required 8-carbon sugar) for incorporation into bacterial lipopolysaccharide in Gram-negative bacteria. The chain is 3-deoxy-manno-octulosonate cytidylyltransferase from Pseudomonas entomophila (strain L48).